Reading from the N-terminus, the 757-residue chain is E3 ubiquitin-protein ligase RNF12-B (757 aa).

A compositionally biased stretch (polar residues) spans 1-10; sequence MESADSTGKG. Disordered stretches follow at residues 1–29, 68–519, and 619–652; these read MESA…LDRE, LQQI…TYES, and EPAE…GGVT. A compositionally biased stretch (low complexity) spans 11–21; that stretch reads STEQSESQRQS. Composition is skewed to polar residues over residues 110–138 and 147–163; these read SVRQ…NPNS and INVN…SLDQ. Tandem repeats lie at residues 197–202, 203–208, 209–214, 215–220, 221–226, 227–232, 237–242, 243–248, 249–254, 255–260, 261–266, 267–272, 273–278, 279–284, 285–290, 291–296, 297–302, 303–308, 309–314, 315–320, and 321–326. Residues 197-326 form a 21 X 6 AA approximate repeats of P-[EV]-S-V-[PA]-[EV] region; that stretch reads PESVDEPVSV…SVPVPESVPV (130 aa). Over residues 202 to 237 the composition is skewed to low complexity; sequence EPVSVAEPVSVAEPVSVAEPESVAEPESVAASVPVP. A compositionally biased stretch (acidic residues) spans 245–313; sequence SVPEPESVPE…ESVPEPESIA (69 aa). Low complexity predominate over residues 314–327; sequence EPESVPVPESVPVA. Residues 352-367 show a composition bias toward basic and acidic residues; sequence RSPDQRRTRARTDRSR. Positions 383–392 are enriched in polar residues; it reads HSSSQTVDAS. Low complexity predominate over residues 408–424; that stretch reads SSQVHSSSSNETEGSSR. The segment covering 428–452 has biased composition (polar residues); that stretch reads HITARQQALGTEGQSQSTVHLSNPE. Residues 453-466 show a composition bias toward low complexity; that stretch reads SRSSSQTPQTDSPS. Residues 467–476 show a composition bias toward polar residues; the sequence is NAETTGTGQR. Over residues 490-500 the composition is skewed to basic and acidic residues; that stretch reads RPGDYRQRDSI. A compositionally biased stretch (polar residues) spans 501 to 517; it reads ANRTRSRSQTPNNTVTY. An RING-type; atypical zinc finger spans residues 703–744; sequence CSVCITEYTEGNKLRKLPCSHEYHIHCIDRWLSENSTCPICR. A PDZ-binding motif is present at residues 754–757; that stretch reads ESIV.

Belongs to the RNF12 family. As to quaternary structure, forms homodimers through the C-terminal region. The N-terminus interacts with the homeobox of LIM/homeobox factor lhx1/lim1, with lhx3/lim3 and lhx5/lim5, and with the N-terminus of ldb1. Shows overlapping expression with lhx1/lim1 and ldb1 in the gastrula mesoderm, and expression overlaps with ldb1 throughout early embryogenesis. After gastrulation, expression is gradually restricted to tissues originated from the ectoderm, the neuroectoderm, neural crest and epidermis, and subsequently to the neural tube as well as the head and tailbud region.

It is found in the nucleus. The enzyme catalyses S-ubiquitinyl-[E2 ubiquitin-conjugating enzyme]-L-cysteine + [acceptor protein]-L-lysine = [E2 ubiquitin-conjugating enzyme]-L-cysteine + N(6)-ubiquitinyl-[acceptor protein]-L-lysine.. It participates in protein modification; protein ubiquitination. Its function is as follows. Acts as an E3 ubiquitin-protein ligase specific for ldb1, mediating ubiquitination and proteasome-dependent degradation of excess ldb1 in a RING-dependent manner. Does not degrade ldb1 bound to lhx1/lim1, nor lim1 itself and thus contributes to the establishment of proper ldb1-lhx1/lim1 stoichiometry and the formation of a ldb1-lhx1/lim1 complex. Interferes with Spemann organizer function and suppresses secondary axis formation induced by ldb1 and lhx1/lim1. The sequence is that of E3 ubiquitin-protein ligase RNF12-B (rnf12-b) from Xenopus laevis (African clawed frog).